The following is an 87-amino-acid chain: Small ribosomal subunit protein uS17 (87 aa).

This sequence belongs to the universal ribosomal protein uS17 family. Part of the 30S ribosomal subunit.

Functionally, one of the primary rRNA binding proteins, it binds specifically to the 5'-end of 16S ribosomal RNA. The sequence is that of Small ribosomal subunit protein uS17 from Bacillus mycoides (strain KBAB4) (Bacillus weihenstephanensis).